The chain runs to 230 residues: Cytidylate kinase (230 aa).

12 to 20 (GPSGTGKST) serves as a coordination point for ATP.

This sequence belongs to the cytidylate kinase family. Type 1 subfamily.

The protein localises to the cytoplasm. It carries out the reaction CMP + ATP = CDP + ADP. It catalyses the reaction dCMP + ATP = dCDP + ADP. This Corynebacterium efficiens (strain DSM 44549 / YS-314 / AJ 12310 / JCM 11189 / NBRC 100395) protein is Cytidylate kinase.